A 547-amino-acid polypeptide reads, in one-letter code: Sodium/hydrogen exchanger 9B2 (547 aa).

The segment at 1-68 (MEDEDKTAEC…PQDSPTEPNG (68 aa)) is disordered. Residues 1 to 86 (MEDEDKTAEC…ACPPRGCLAR (86 aa)) lie on the Cytoplasmic side of the membrane. The segment covering 23–45 (APPHHELQEERVMSLRGTDRSEP) has biased composition (basic and acidic residues). Phosphoserine is present on Ser-49. A helical membrane pass occupies residues 87 to 104 (VITNGTMVVLLWAMVWSV). Over 105–113 (TGPECLPGG) the chain is Extracellular. The helical transmembrane segment at 114 to 133 (NLFGIIILFYCSITGGKLFG) threads the bilayer. Topologically, residues 134–144 (LIKFPTLPPLP) are cytoplasmic. Residues 145–161 (PLLGMLLAGFLLRNIPV) traverse the membrane as a helical segment. The Extracellular portion of the chain corresponds to 162 to 171 (INDSVRIQHK). A helical transmembrane segment spans residues 172–189 (WSSSLRSIALSVILVRAG). Topologically, residues 190–200 (LGLDSKALRKL) are cytoplasmic. The chain crosses the membrane as a helical span at residues 201–227 (KGVCVRLAMGPCIVEACASAILSHFLM). Over 228–233 (GLPWQW) the chain is Extracellular. The chain crosses the membrane as a helical span at residues 234–242 (GFILGFVVG). At 243–270 (AVSPAVVVPSMLLLQEGGYGVGKGIPTL) the chain is on the cytoplasmic side. The Na(+) site is built by Val-244, Gly-275, Asp-278, and Asp-279. A helical transmembrane segment spans residues 271–290 (LMAAGSFDDILAITGFNTCL). Over 291–300 (GVAFSTGSTV) the chain is Extracellular. Residues 301 to 324 (FNIFRGILEVVIGVAAGSFLGFFI) form a helical membrane-spanning segment. At 325–339 (QYFPSRDQDNLVWKR) the chain is on the cytoplasmic side. Residues 340 to 357 (AFLVLGFAVLAVFSSVYF) form a helical membrane-spanning segment. Residues 358–361 (SFPG) are Extracellular-facing. The helical transmembrane segment at 362-373 (SGGLCTLVMAFL) threads the bilayer. At 374-390 (AGMRWTDKKSEVEKVIA) the chain is on the cytoplasmic side. Residues 391–411 (VTWDVFQPLLFGLIGAEVSIV) traverse the membrane as a helical segment. Residues 412–417 (SLRAET) lie on the Extracellular side of the membrane. A helical membrane pass occupies residues 418–440 (VGLCVATLSIAVLIRILTTFLMV). Residues 441 to 461 (CFAGFNIKEKIFISFAWLPKA) are Cytoplasmic-facing. A helical membrane pass occupies residues 462–473 (TVQAAIGSVALD). The Extracellular portion of the chain corresponds to 474–486 (TARSHGEKQLEDY). Residues 487-509 (GMDVLTVAFLAILITAPIGSLLI) form a helical membrane-spanning segment. At 510–547 (GLLGPRVLQKSEHRTEEEVQGETSAHIQRKPEDSITEA) the chain is on the cytoplasmic side. Positions 522 to 547 (HRTEEEVQGETSAHIQRKPEDSITEA) are disordered. The span at 538–547 (RKPEDSITEA) shows a compositional bias: basic and acidic residues.

This sequence belongs to the monovalent cation:proton antiporter 1 (CPA1) transporter (TC 2.A.36) family. As to quaternary structure, homodimer; dimerization is essential for SLC9B2 activity. Lipids seem to play a role in the stabilization of the dimerization subdomain. As to expression, widely expressed. However expression seems to be restricted to specific cell types within individual organs, e.g. osteoclasts in the bone, distal tubules of the kidney or beta-cells of Langerhans islets. In sperm specifically present in the principal piece of sperm tail (at protein level).

The protein localises to the cell membrane. Its subcellular location is the mitochondrion membrane. It localises to the endosome membrane. The protein resides in the lysosome membrane. It is found in the recycling endosome membrane. The protein localises to the cytoplasmic vesicle. Its subcellular location is the secretory vesicle. It localises to the synaptic vesicle membrane. The protein resides in the cell projection. It is found in the cilium. The protein localises to the flagellum membrane. Its subcellular location is the basolateral cell membrane. It localises to the apical cell membrane. It carries out the reaction Na(+)(in) + H(+)(out) = Na(+)(out) + H(+)(in). The enzyme catalyses Li(+)(out) + H(+)(in) = Li(+)(in) + H(+)(out). It catalyses the reaction Li(+)(in) + Na(+)(out) = Li(+)(out) + Na(+)(in). With respect to regulation, allosterically inhibited by the N-terminal domain. Inhibited by phloretin. Functionally, electroneutral Na(+) Li(+)/H(+) antiporter that extrudes Na(+) or Li(+) in exchange for external protons across the membrane. Uses the proton gradient/membrane potential to extrude sodium. Contributes to the regulation of intracellular pH and sodium homeostasis. Also able to mediate Na(+)/Li(+) antiporter activity in kidney. May play a physiological role in renal tubular function and blood pressure homeostasis. Plays an important role for insulin secretion and clathrin-mediated endocytosis in beta-cells. Involved in sperm motility and fertility. It is controversial whether SLC9B2 plays a role in osteoclast differentiation or not. The polypeptide is Sodium/hydrogen exchanger 9B2 (Mus musculus (Mouse)).